We begin with the raw amino-acid sequence, 240 residues long: 3-deoxy-D-manno-octulosonic acid kinase (240 aa).

D170 is an active-site residue.

This sequence belongs to the protein kinase superfamily. KdkA/RfaP family.

It is found in the cell inner membrane. It carries out the reaction an alpha-Kdo-(2-&gt;6)-lipid IVA + ATP = a 4-O-phospho-alpha-Kdo-(2-&gt;6)-lipid IVA + ADP + H(+). The protein operates within bacterial outer membrane biogenesis; LPS core biosynthesis. Catalyzes the ATP-dependent phosphorylation of the 3-deoxy-D-manno-octulosonic acid (Kdo) residue in Kdo-lipid IV(A) at the 4-OH position. This chain is 3-deoxy-D-manno-octulosonic acid kinase, found in Actinobacillus succinogenes (strain ATCC 55618 / DSM 22257 / CCUG 43843 / 130Z).